A 470-amino-acid polypeptide reads, in one-letter code: Growth/differentiation factor 6 (470 aa).

The signal sequence occupies residues 1–22 (MDTSRVLLSAVFLISFLWDLPG). A propeptide spanning residues 23–350 (FQQASISSSS…SPSPGRRRRR (328 aa)) is cleaved from the precursor. Positions 28-98 (ISSSSSSAEL…REPPGRGPRV (71 aa)) are disordered. Positions 45-80 (SRKEGRMPRAPRENATAREPLDRQEPPPRPQEEPQR) are enriched in basic and acidic residues. N120 carries an N-linked (GlcNAc...) asparagine glycan. Disordered regions lie at residues 247-272 (PGAA…SLGF) and 308-366 (TEVV…KKSR). Residues 321 to 333 (GPPPPPPPPPPSG) are compositionally biased toward pro residues. Residues 345–366 (GRRRRRTAFASRHGKRHGKKSR) show a composition bias toward basic residues. 3 cysteine pairs are disulfide-bonded: C369–C435, C398–C467, and C402–C469.

It belongs to the TGF-beta family. In terms of assembly, homodimer; disulfide-linked.

The protein localises to the secreted. Growth factor that controls proliferation and cellular differentiation in the retina and bone formation. Plays a key role in regulating apoptosis during retinal development. Establishes dorsal-ventral positional information in the retina and controls the formation of the retinotectal map. Required for normal formation of bones and joints in the limbs, skull, digits and axial skeleton. Plays a key role in establishing boundaries between skeletal elements during development. Regulation of GDF6 expression seems to be a mechanism for evolving species-specific changes in skeletal structures. Seems to positively regulate differentiation of chondrogenic tissue through the growth factor receptors subunits BMPR1A, BMPR1B, BMPR2 and ACVR2A, leading to the activation of SMAD1-SMAD5-SMAD8 complex. The regulation of chondrogenic differentiation is inhibited by NOG. Also involved in the induction of adipogenesis from mesenchymal stem cells. This mechanism acts through the growth factor receptors subunits BMPR1A, BMPR2 and ACVR2A and the activation of SMAD1-SMAD5-SMAD8 complex and MAPK14/p38. The protein is Growth/differentiation factor 6 (GDF6) of Bos taurus (Bovine).